Consider the following 253-residue polypeptide: Sulfate transporter CysZ (253 aa).

4 consecutive transmembrane segments (helical) span residues 31–51, 72–92, 151–171, and 222–242; these read FVIL…WWLF, LSYL…GYFF, IVLL…PVLW, and IPVL…AMWV.

The protein belongs to the CysZ family.

It localises to the cell inner membrane. Its function is as follows. Possibly involved in sulfate transport. Functionally, high affinity, high specificity proton-dependent sulfate transporter, which mediates sulfate uptake. Provides the sulfur source for the cysteine synthesis pathway. This Salmonella typhimurium (strain LT2 / SGSC1412 / ATCC 700720) protein is Sulfate transporter CysZ.